Consider the following 147-residue polypeptide: 3-dehydroquinate dehydratase (147 aa).

Tyr23 serves as the catalytic Proton acceptor. Asn74, His80, and Asp87 together coordinate substrate. His100 serves as the catalytic Proton donor. Substrate-binding positions include Leu101–Ser102 and Arg111.

The protein belongs to the type-II 3-dehydroquinase family. Homododecamer.

The catalysed reaction is 3-dehydroquinate = 3-dehydroshikimate + H2O. The protein operates within metabolic intermediate biosynthesis; chorismate biosynthesis; chorismate from D-erythrose 4-phosphate and phosphoenolpyruvate: step 3/7. Catalyzes a trans-dehydration via an enolate intermediate. The sequence is that of 3-dehydroquinate dehydratase from Clostridium botulinum (strain Loch Maree / Type A3).